The sequence spans 179 residues: Ribosome-recycling factor (179 aa).

The protein belongs to the RRF family.

It is found in the cytoplasm. Functionally, responsible for the release of ribosomes from messenger RNA at the termination of protein biosynthesis. May increase the efficiency of translation by recycling ribosomes from one round of translation to another. This Chlamydia trachomatis serovar D (strain ATCC VR-885 / DSM 19411 / UW-3/Cx) protein is Ribosome-recycling factor.